Here is a 234-residue protein sequence, read N- to C-terminus: MTNERHDELACLGIFPLKNPKQLDGVVTPILQLRVKFLAPTDRWWEGLVINKDLSKEESEELWKFLQSFDPRSAKFVGRGTPEDHVISYLFEAGKYEFEVFFYQKDHSLKLMGLYDKTQKQLLRRDSSGDLTSTDKERDVSPVSHSEKPYWDRYDLDQPSNQDVEESRNLVQEPKHRSKKYDRLGLDELVMEQTASLWKICSRNGMSVDEFLRFIRMGLESNFQHSNQVIPTHF.

Basic and acidic residues predominate over residues 126 to 156 (DSSGDLTSTDKERDVSPVSHSEKPYWDRYDL). A disordered region spans residues 126 to 176 (DSSGDLTSTDKERDVSPVSHSEKPYWDRYDLDQPSNQDVEESRNLVQEPKH). Residues serine 127 and serine 128 each carry the phosphoserine modification. Threonine 132 is modified (phosphothreonine). The residue at position 141 (serine 141) is a Phosphoserine.

It localises to the cytoplasm. Its function is as follows. Has a role in meiosis. The chain is Meiotically up-regulated gene 35 protein (mug35) from Schizosaccharomyces pombe (strain 972 / ATCC 24843) (Fission yeast).